A 441-amino-acid polypeptide reads, in one-letter code: Ribulose bisphosphate carboxylase large chain (441 aa).

N89 and T139 together coordinate substrate. K141 (proton acceptor) is an active-site residue. A substrate-binding site is contributed by K143. Mg(2+)-binding residues include K167, D169, and E170. An N6-carboxylysine modification is found at K167. Catalysis depends on H260, which acts as the Proton acceptor. The substrate site is built by R261, H293, and S345.

This sequence belongs to the RuBisCO large chain family. Type I subfamily. As to quaternary structure, heterohexadecamer of 8 large chains and 8 small chains; disulfide-linked. The disulfide link is formed within the large subunit homodimers. It depends on Mg(2+) as a cofactor. The disulfide bond which can form in the large chain dimeric partners within the hexadecamer appears to be associated with oxidative stress and protein turnover.

The protein localises to the plastid. It localises to the chloroplast. The enzyme catalyses 2 (2R)-3-phosphoglycerate + 2 H(+) = D-ribulose 1,5-bisphosphate + CO2 + H2O. It carries out the reaction D-ribulose 1,5-bisphosphate + O2 = 2-phosphoglycolate + (2R)-3-phosphoglycerate + 2 H(+). Its function is as follows. RuBisCO catalyzes two reactions: the carboxylation of D-ribulose 1,5-bisphosphate, the primary event in carbon dioxide fixation, as well as the oxidative fragmentation of the pentose substrate in the photorespiration process. Both reactions occur simultaneously and in competition at the same active site. In Symphoricarpos albus (Common snowberry), this protein is Ribulose bisphosphate carboxylase large chain.